The sequence spans 420 residues: Sulfate adenylyltransferase (420 aa).

Belongs to the sulfate adenylyltransferase family.

The enzyme catalyses sulfate + ATP + H(+) = adenosine 5'-phosphosulfate + diphosphate. The protein operates within sulfur metabolism; hydrogen sulfide biosynthesis; sulfite from sulfate: step 1/3. In Desulforudis audaxviator (strain MP104C), this protein is Sulfate adenylyltransferase.